Here is a 355-residue protein sequence, read N- to C-terminus: Uroporphyrinogen decarboxylase (355 aa).

Substrate is bound by residues 27 to 31 (RQAGR), aspartate 77, tyrosine 154, threonine 209, and histidine 327.

The protein belongs to the uroporphyrinogen decarboxylase family. In terms of assembly, homodimer.

Its subcellular location is the cytoplasm. The enzyme catalyses uroporphyrinogen III + 4 H(+) = coproporphyrinogen III + 4 CO2. The protein operates within porphyrin-containing compound metabolism; protoporphyrin-IX biosynthesis; coproporphyrinogen-III from 5-aminolevulinate: step 4/4. In terms of biological role, catalyzes the decarboxylation of four acetate groups of uroporphyrinogen-III to yield coproporphyrinogen-III. The polypeptide is Uroporphyrinogen decarboxylase (Yersinia pseudotuberculosis serotype O:1b (strain IP 31758)).